A 655-amino-acid polypeptide reads, in one-letter code: tRNA 5-methylaminomethyl-2-thiouridine biosynthesis bifunctional protein MnmC (655 aa).

Residues 1-236 (MTDPLVPAVL…KRAMLVGRFA (236 aa)) are tRNA (mnm(5)s(2)U34)-methyltransferase. Residues 260-655 (IGTGLAGCAA…LRALRQGTAS (396 aa)) form an FAD-dependent cmnm(5)s(2)U34 oxidoreductase region.

The protein in the N-terminal section; belongs to the methyltransferase superfamily. tRNA (mnm(5)s(2)U34)-methyltransferase family. This sequence in the C-terminal section; belongs to the DAO family. FAD serves as cofactor.

The protein resides in the cytoplasm. It catalyses the reaction 5-aminomethyl-2-thiouridine(34) in tRNA + S-adenosyl-L-methionine = 5-methylaminomethyl-2-thiouridine(34) in tRNA + S-adenosyl-L-homocysteine + H(+). Its function is as follows. Catalyzes the last two steps in the biosynthesis of 5-methylaminomethyl-2-thiouridine (mnm(5)s(2)U) at the wobble position (U34) in tRNA. Catalyzes the FAD-dependent demodification of cmnm(5)s(2)U34 to nm(5)s(2)U34, followed by the transfer of a methyl group from S-adenosyl-L-methionine to nm(5)s(2)U34, to form mnm(5)s(2)U34. The protein is tRNA 5-methylaminomethyl-2-thiouridine biosynthesis bifunctional protein MnmC of Paraburkholderia phymatum (strain DSM 17167 / CIP 108236 / LMG 21445 / STM815) (Burkholderia phymatum).